Here is a 157-residue protein sequence, read N- to C-terminus: 2-C-methyl-D-erythritol 2,4-cyclodiphosphate synthase (157 aa).

D8 and H10 together coordinate a divalent metal cation. 4-CDP-2-C-methyl-D-erythritol 2-phosphate is bound by residues 8-10 (DVH) and 34-35 (HS). H42 contacts a divalent metal cation. 4-CDP-2-C-methyl-D-erythritol 2-phosphate-binding positions include 56 to 58 (DIG), 61 to 65 (FPDTD), 100 to 106 (AQAPKMA), 132 to 135 (TTTE), F139, and R142.

It belongs to the IspF family. In terms of assembly, homotrimer. The cofactor is a divalent metal cation.

The enzyme catalyses 4-CDP-2-C-methyl-D-erythritol 2-phosphate = 2-C-methyl-D-erythritol 2,4-cyclic diphosphate + CMP. It functions in the pathway isoprenoid biosynthesis; isopentenyl diphosphate biosynthesis via DXP pathway; isopentenyl diphosphate from 1-deoxy-D-xylulose 5-phosphate: step 4/6. Involved in the biosynthesis of isopentenyl diphosphate (IPP) and dimethylallyl diphosphate (DMAPP), two major building blocks of isoprenoid compounds. Catalyzes the conversion of 4-diphosphocytidyl-2-C-methyl-D-erythritol 2-phosphate (CDP-ME2P) to 2-C-methyl-D-erythritol 2,4-cyclodiphosphate (ME-CPP) with a corresponding release of cytidine 5-monophosphate (CMP). This is 2-C-methyl-D-erythritol 2,4-cyclodiphosphate synthase from Pseudomonas fluorescens (strain Pf0-1).